The chain runs to 285 residues: Bifunctional protein FolD (285 aa).

NADP(+)-binding positions include 169–171 (GRS), serine 194, and isoleucine 235.

It belongs to the tetrahydrofolate dehydrogenase/cyclohydrolase family. As to quaternary structure, homodimer.

It catalyses the reaction (6R)-5,10-methylene-5,6,7,8-tetrahydrofolate + NADP(+) = (6R)-5,10-methenyltetrahydrofolate + NADPH. The catalysed reaction is (6R)-5,10-methenyltetrahydrofolate + H2O = (6R)-10-formyltetrahydrofolate + H(+). The protein operates within one-carbon metabolism; tetrahydrofolate interconversion. In terms of biological role, catalyzes the oxidation of 5,10-methylenetetrahydrofolate to 5,10-methenyltetrahydrofolate and then the hydrolysis of 5,10-methenyltetrahydrofolate to 10-formyltetrahydrofolate. The sequence is that of Bifunctional protein FolD from Microcystis aeruginosa (strain NIES-843 / IAM M-2473).